A 1119-amino-acid polypeptide reads, in one-letter code: Leucine-rich repeats and immunoglobulin-like domains protein 3 (1119 aa).

The N-terminal stretch at 1–24 (MSAPSLRARAAGLGLLLCAVLGRA) is a signal peptide. One can recognise an LRRNT domain in the interval 38-74 (PSGVAAERPCPTTCRCLGDLLDCSRKRLARLPEPLPS). 15 LRR repeats span residues 75–96 (WVARLDLSHNRLSFIKASSMSH), 99–120 (SLREVKLNNNELETIPNLGPVS), 122–142 (NITLLSLAGNRIVEILPEHLK), 146–167 (SLETLDLSSNNISELQTAFPAL), 168–189 (QLKYLYLNSNRVTSMEPGYFDN), 193–214 (TLLVLKLNRNRISAIPPKMFKL), 216–237 (QLQHLELNRNKIKNVDGLTFQG), 240–261 (ALKSLKMQRNGVTKLMDGAFWG), 264–285 (NMEILQLDHNNLTEITKGWLYG), 288–309 (MLQELHLSQNAINRISPDAWEF), 312–333 (KLSELDLTFNHLSRLDDSSFLG), 336–357 (LLNTLHIGNNRVSYIADCAFRG), 360–382 (SLKTLDLKNNEISWTIEDMNGAF), 387–408 (KLRRLILQGNRIRSITKKAFTG), and 411–432 (ALEHLDLSDNAIMSLQGNAFSQ). Residues Asn122 and Asn156 are each glycosylated (N-linked (GlcNAc...) asparagine). Asn274 is a glycosylation site (N-linked (GlcNAc...) asparagine). N-linked (GlcNAc...) asparagine glycans are attached at residues Asn442, Asn469, and Asn515. The region spanning 444 to 495 (SSLLCDCQLKWLPQWVAENNFQSFVNASCAHPQLLKGRSIFAVSPDGFVCDD) is the LRRCT domain. Ig-like C2-type domains are found at residues 499–598 (PQIT…AKLT), 603–692 (PSFT…ATLT), and 697–783 (PSFL…VRLS). Disulfide bonds link Cys520-Cys581 and Cys624-Cys676. 2 N-linked (GlcNAc...) asparagine glycosylation sites follow: Asn688 and Asn729. Residues Cys718 and Cys767 are joined by a disulfide bond. The chain crosses the membrane as a helical span at residues 810–830 (VVIIAVVCCVVGTSLVWVVII). 4 N-linked (GlcNAc...) asparagine glycosylation sites follow: Asn905, Asn987, Asn999, and Asn1016. The tract at residues 1073–1093 (SSPDLDSGSEEDGKERTDFQE) is disordered. Basic and acidic residues predominate over residues 1083-1093 (EDGKERTDFQE).

As to quaternary structure, interacts with EGFR, ERBB2 and ERBB4 (in vitro). As to expression, widely expressed.

It is found in the cell membrane. The protein resides in the cytoplasmic vesicle membrane. In terms of biological role, may play a role in craniofacial and inner ear morphogenesis during embryonic development. May act within the otic vesicle epithelium to control formation of the lateral semicircular canal in the inner ear, possibly by restricting the expression of NTN1. In Homo sapiens (Human), this protein is Leucine-rich repeats and immunoglobulin-like domains protein 3 (LRIG3).